Consider the following 79-residue polypeptide: Phosphoribosylformylglycinamidine synthase subunit PurS (79 aa).

Belongs to the PurS family. As to quaternary structure, homodimer. Part of the FGAM synthase complex composed of 1 PurL, 1 PurQ and 2 PurS subunits.

The protein resides in the cytoplasm. The catalysed reaction is N(2)-formyl-N(1)-(5-phospho-beta-D-ribosyl)glycinamide + L-glutamine + ATP + H2O = 2-formamido-N(1)-(5-O-phospho-beta-D-ribosyl)acetamidine + L-glutamate + ADP + phosphate + H(+). It functions in the pathway purine metabolism; IMP biosynthesis via de novo pathway; 5-amino-1-(5-phospho-D-ribosyl)imidazole from N(2)-formyl-N(1)-(5-phospho-D-ribosyl)glycinamide: step 1/2. In terms of biological role, part of the phosphoribosylformylglycinamidine synthase complex involved in the purines biosynthetic pathway. Catalyzes the ATP-dependent conversion of formylglycinamide ribonucleotide (FGAR) and glutamine to yield formylglycinamidine ribonucleotide (FGAM) and glutamate. The FGAM synthase complex is composed of three subunits. PurQ produces an ammonia molecule by converting glutamine to glutamate. PurL transfers the ammonia molecule to FGAR to form FGAM in an ATP-dependent manner. PurS interacts with PurQ and PurL and is thought to assist in the transfer of the ammonia molecule from PurQ to PurL. This chain is Phosphoribosylformylglycinamidine synthase subunit PurS, found in Mycobacterium leprae (strain TN).